The chain runs to 403 residues: Non-structural maintenance of chromosomes element 4 homolog A (403 aa).

Positions 1–45 (MRKTVKRESEATGGKREADDEPEKLRSVKKEKQRKTEADSVRPDE) are enriched in basic and acidic residues. Disordered regions lie at residues 1–57 (MRKT…QGIS), 194–226 (LKQR…EEKT), and 342–403 (SSCP…LTSS). Basic residues predominate over residues 196 to 206 (QRKRAPNRKRT). Positions 342 to 353 (SSCPAASAPASA) are enriched in low complexity. A compositionally biased stretch (polar residues) spans 354-363 (DFTQDTQTTP). A compositionally biased stretch (basic and acidic residues) spans 384 to 393 (TPDKEGDGTR). Positions 394–403 (RRCKRRLTSS) are enriched in basic residues.

The protein belongs to the NSE4 family. In terms of assembly, interacts with SMC5, SMC6A or SMC6B. The SMC5-SMC6 complex is composed of the SMC5 and SMC6 heterodimer attached via their hinge domain and from the non-SMC subunit NSE4A or NSE4B. Expressed in seedlings, rosette leaves and floral buds.

The protein localises to the nucleus. Its function is as follows. Component of the SMC5-SMC6 complex, that promotes sister chromatid alignment after DNA damage and facilitates double-stranded DNA breaks (DSBs) repair via homologous recombination between sister chromatids. The protein is Non-structural maintenance of chromosomes element 4 homolog A (NSE4A) of Arabidopsis thaliana (Mouse-ear cress).